We begin with the raw amino-acid sequence, 183 residues long: MKNRLLFLGPPGAGKGTQAARICDSNGMKHLSTGDLLRSEVAAGSELGKEAEAVMNRGELVSDQLVLAIVESQMKALSGEGWLLDGFPRTVPQAEALEPLLNELKQPIEAVVLLELDDAVLITRMLSRGRADDNEDVIRNRLEVYRDKTAPLISYYQNKGLLISVPAQGSVEEITERICKVLD.

12-17 (GAGKGT) contributes to the ATP binding site. Residues 32–61 (STGDLLRSEVAAGSELGKEAEAVMNRGELV) are NMP. AMP is bound by residues threonine 33, arginine 38, 59–61 (ELV), 86–89 (GFPR), and glutamine 93. The tract at residues 127 to 133 (SRGRADD) is LID. Arginine 128 contacts ATP. Residues arginine 130 and arginine 141 each contribute to the AMP site. Glycine 169 contacts ATP.

This sequence belongs to the adenylate kinase family. Monomer.

The protein resides in the cytoplasm. The catalysed reaction is AMP + ATP = 2 ADP. It functions in the pathway purine metabolism; AMP biosynthesis via salvage pathway; AMP from ADP: step 1/1. Its function is as follows. Catalyzes the reversible transfer of the terminal phosphate group between ATP and AMP. Plays an important role in cellular energy homeostasis and in adenine nucleotide metabolism. The polypeptide is Adenylate kinase (Synechococcus sp. (strain CC9902)).